The sequence spans 230 residues: MAHPTQLGFQDAASPVMEELLHFHDHALMIVFLISTLVLYIIIAMVSTKLTNKYILDSQEIEIVWTILPAVILVLIALPSLRILYLMDEINDPHLTIKAMGHQWYWSYEYTDYENLGFDSYMVPTQDLAPGQFRLLETDHRMVVPMESPVRILVSAEDVLHSWAVPSLGVKMDAVPGRLNQTAFIASRPGVFYGQCSEICGANHSFMPIVVEAVPLEHFENWSSLMLEDA.

Over 1 to 14 (MAHPTQLGFQDAAS) the chain is Mitochondrial intermembrane. The helical transmembrane segment at 15 to 45 (PVMEELLHFHDHALMIVFLISTLVLYIIIAM) threads the bilayer. Over 46-59 (VSTKLTNKYILDSQ) the chain is Mitochondrial matrix. The helical transmembrane segment at 60–87 (EIEIVWTILPAVILVLIALPSLRILYLM) threads the bilayer. At 88 to 230 (DEINDPHLTI…NWSSLMLEDA (143 aa)) the chain is on the mitochondrial intermembrane side. Cu cation contacts are provided by His161, Cys196, Glu198, Cys200, His204, and Met207. Glu198 is a binding site for Mg(2+).

It belongs to the cytochrome c oxidase subunit 2 family. As to quaternary structure, component of the cytochrome c oxidase (complex IV, CIV), a multisubunit enzyme composed of 14 subunits. The complex is composed of a catalytic core of 3 subunits MT-CO1, MT-CO2 and MT-CO3, encoded in the mitochondrial DNA, and 11 supernumerary subunits COX4I, COX5A, COX5B, COX6A, COX6B, COX6C, COX7A, COX7B, COX7C, COX8 and NDUFA4, which are encoded in the nuclear genome. The complex exists as a monomer or a dimer and forms supercomplexes (SCs) in the inner mitochondrial membrane with NADH-ubiquinone oxidoreductase (complex I, CI) and ubiquinol-cytochrome c oxidoreductase (cytochrome b-c1 complex, complex III, CIII), resulting in different assemblies (supercomplex SCI(1)III(2)IV(1) and megacomplex MCI(2)III(2)IV(2)). Found in a complex with TMEM177, COA6, COX18, COX20, SCO1 and SCO2. Interacts with TMEM177 in a COX20-dependent manner. Interacts with COX20. Interacts with COX16. It depends on Cu cation as a cofactor.

Its subcellular location is the mitochondrion inner membrane. It catalyses the reaction 4 Fe(II)-[cytochrome c] + O2 + 8 H(+)(in) = 4 Fe(III)-[cytochrome c] + 2 H2O + 4 H(+)(out). Functionally, component of the cytochrome c oxidase, the last enzyme in the mitochondrial electron transport chain which drives oxidative phosphorylation. The respiratory chain contains 3 multisubunit complexes succinate dehydrogenase (complex II, CII), ubiquinol-cytochrome c oxidoreductase (cytochrome b-c1 complex, complex III, CIII) and cytochrome c oxidase (complex IV, CIV), that cooperate to transfer electrons derived from NADH and succinate to molecular oxygen, creating an electrochemical gradient over the inner membrane that drives transmembrane transport and the ATP synthase. Cytochrome c oxidase is the component of the respiratory chain that catalyzes the reduction of oxygen to water. Electrons originating from reduced cytochrome c in the intermembrane space (IMS) are transferred via the dinuclear copper A center (CU(A)) of subunit 2 and heme A of subunit 1 to the active site in subunit 1, a binuclear center (BNC) formed by heme A3 and copper B (CU(B)). The BNC reduces molecular oxygen to 2 water molecules using 4 electrons from cytochrome c in the IMS and 4 protons from the mitochondrial matrix. This Carassius auratus (Goldfish) protein is Cytochrome c oxidase subunit 2 (mt-co2).